We begin with the raw amino-acid sequence, 478 residues long: Sedoheptulokinase (478 aa).

This sequence belongs to the FGGY kinase family. In terms of tissue distribution, strongly expressed in liver, kidney and pancreas. Expressed at lower levels in placenta and heart. Very weakly expressed in lung and brain.

Its subcellular location is the cytoplasm. It catalyses the reaction sedoheptulose + ATP = D-sedoheptulose 7-phosphate + ADP + H(+). Acts as a modulator of macrophage activation through control of glucose metabolism. The sequence is that of Sedoheptulokinase from Homo sapiens (Human).